The primary structure comprises 762 residues: 5-methyltetrahydropteroyltriglutamate--homocysteine methyltransferase (762 aa).

Residues 16–19 (RELK) and Lys117 contribute to the 5-methyltetrahydropteroyltri-L-glutamate site. Residues 438–440 (IGS) and Glu491 each bind L-homocysteine. L-methionine-binding positions include 438 to 440 (IGS) and Glu491. 5-methyltetrahydropteroyltri-L-glutamate contacts are provided by residues 522 to 523 (RC) and Trp568. Asp606 provides a ligand contact to L-homocysteine. An L-methionine-binding site is contributed by Asp606. Residue Glu612 participates in 5-methyltetrahydropteroyltri-L-glutamate binding. Zn(2+)-binding residues include His648, Cys650, and Glu672. His701 (proton donor) is an active-site residue. Cys733 lines the Zn(2+) pocket.

It belongs to the vitamin-B12 independent methionine synthase family. Requires Zn(2+) as cofactor.

It carries out the reaction 5-methyltetrahydropteroyltri-L-glutamate + L-homocysteine = tetrahydropteroyltri-L-glutamate + L-methionine. It functions in the pathway amino-acid biosynthesis; L-methionine biosynthesis via de novo pathway; L-methionine from L-homocysteine (MetE route): step 1/1. Its function is as follows. Catalyzes the transfer of a methyl group from 5-methyltetrahydrofolate to homocysteine resulting in methionine formation. The protein is 5-methyltetrahydropteroyltriglutamate--homocysteine methyltransferase of Pseudomonas fluorescens (strain ATCC BAA-477 / NRRL B-23932 / Pf-5).